The following is a 205-amino-acid chain: GTP cyclohydrolase-2 (205 aa).

49-53 is a binding site for GTP; the sequence is RLHSE. Residues Cys54, Cys65, and Cys67 each contribute to the Zn(2+) site. Residues Gln70, 92–94, and Thr114 contribute to the GTP site; that span reads EGR. Asp126 (proton acceptor) is an active-site residue. Arg128 functions as the Nucleophile in the catalytic mechanism. GTP-binding residues include Thr149 and Lys154.

It belongs to the GTP cyclohydrolase II family. It depends on Zn(2+) as a cofactor.

It catalyses the reaction GTP + 4 H2O = 2,5-diamino-6-hydroxy-4-(5-phosphoribosylamino)-pyrimidine + formate + 2 phosphate + 3 H(+). Its pathway is cofactor biosynthesis; riboflavin biosynthesis; 5-amino-6-(D-ribitylamino)uracil from GTP: step 1/4. Catalyzes the conversion of GTP to 2,5-diamino-6-ribosylamino-4(3H)-pyrimidinone 5'-phosphate (DARP), formate and pyrophosphate. This chain is GTP cyclohydrolase-2, found in Pseudomonas entomophila (strain L48).